Reading from the N-terminus, the 198-residue chain is Holliday junction branch migration complex subunit RuvA (198 aa).

The domain I stretch occupies residues 1–64 (MIAHLRGTLL…EDAIALFGFL (64 aa)). The domain II stretch occupies residues 65-141 (DREEKRLFER…LDDLIAAAPA (77 aa)). The tract at residues 141-145 (AAGPV) is flexible linker. Residues 146–198 (AAGPAAEDVLSALLNLGYQRPAALKAIETAVEKDAAAGEDFDLLFRAALKLIR) are domain III.

This sequence belongs to the RuvA family. As to quaternary structure, homotetramer. Forms an RuvA(8)-RuvB(12)-Holliday junction (HJ) complex. HJ DNA is sandwiched between 2 RuvA tetramers; dsDNA enters through RuvA and exits via RuvB. An RuvB hexamer assembles on each DNA strand where it exits the tetramer. Each RuvB hexamer is contacted by two RuvA subunits (via domain III) on 2 adjacent RuvB subunits; this complex drives branch migration. In the full resolvosome a probable DNA-RuvA(4)-RuvB(12)-RuvC(2) complex forms which resolves the HJ.

The protein localises to the cytoplasm. Functionally, the RuvA-RuvB-RuvC complex processes Holliday junction (HJ) DNA during genetic recombination and DNA repair, while the RuvA-RuvB complex plays an important role in the rescue of blocked DNA replication forks via replication fork reversal (RFR). RuvA specifically binds to HJ cruciform DNA, conferring on it an open structure. The RuvB hexamer acts as an ATP-dependent pump, pulling dsDNA into and through the RuvAB complex. HJ branch migration allows RuvC to scan DNA until it finds its consensus sequence, where it cleaves and resolves the cruciform DNA. This is Holliday junction branch migration complex subunit RuvA from Acidobacterium capsulatum (strain ATCC 51196 / DSM 11244 / BCRC 80197 / JCM 7670 / NBRC 15755 / NCIMB 13165 / 161).